A 446-amino-acid polypeptide reads, in one-letter code: Regulator of drug sensitivity 2 (446 aa).

The zn(2)-C6 fungal-type DNA-binding region spans 15 to 45 (KTCLFCKRSHVVCDKQRPCSRCVKRDIAHLC). Disordered regions lie at residues 52 to 106 (VPNE…PKLD) and 158 to 218 (ASNV…KEES). Composition is skewed to polar residues over residues 56-70 (MPSQ…NNIQ) and 84-96 (DYQN…SGST). The residue at position 102 (Ser102) is a Phosphoserine. Positions 160 to 177 (NVHLENGSQTTQSPLEYQ) are enriched in polar residues. Basic and acidic residues predominate over residues 178–192 (NDNRRDEIGVARQEN). Over residues 193–206 (RSPTIMSGSSNSIS) the composition is skewed to polar residues. Basic and acidic residues predominate over residues 207-218 (KGDKQDQEKEES). Phosphothreonine is present on Thr231.

Post-translationally, phosphorylated by SNF1 in absence of glucose. The phosphorylation is required for induction of transcription of gluconeogenic genes.

It is found in the cytoplasm. The protein localises to the nucleus. In terms of biological role, transcription factor which regulates the expression of genes for gluconeogenesis, the TCA cycle, and glucose metabolism. Involved in the cell wall remodeling process and drug resistance. This Saccharomyces cerevisiae (strain ATCC 204508 / S288c) (Baker's yeast) protein is Regulator of drug sensitivity 2 (RDS2).